The following is a 302-amino-acid chain: UPF0725 protein At1g23960 (302 aa).

A2 bears the N-acetylalanine mark.

The protein belongs to the UPF0725 (EMB2204) family.

The polypeptide is UPF0725 protein At1g23960 (Arabidopsis thaliana (Mouse-ear cress)).